We begin with the raw amino-acid sequence, 246 residues long: Protein DEHYDRATION-INDUCED 19 homolog 3 (246 aa).

Positions 185–230 (ERSKAPVPIPDDTSIHKDTPAQPWESRIDSSLTSEEREQKRKQATD) are disordered. The span at 218 to 229 (SEEREQKRKQAT) shows a compositional bias: basic and acidic residues.

Belongs to the Di19 family.

This chain is Protein DEHYDRATION-INDUCED 19 homolog 3 (DI19-3), found in Oryza sativa subsp. japonica (Rice).